Consider the following 101-residue polypeptide: Alkene monooxygenase system, effector subunit (101 aa).

The protein belongs to the TmoD/XamoD family. In terms of assembly, monomer. The alkene monooxygenase multicomponent enzyme system is composed of an electron transfer component and a monooxygenase component interacting with the effector protein XamoD. The electron transfer component is composed of a ferredoxin reductase (XamoF) and a ferredoxin (XamoC), and the monooxygenase component is formed by a heterohexamer (dimer of heterotrimers) of two alpha subunits (XamoA), two beta subunits (XamoE) and two gamma subunits (XamoB).

The protein localises to the cytoplasm. Effector component of the alkene monooxygenase multicomponent enzyme system which catalyzes the O2- and NADH-dependent epoxidation of short chain (C2 to C6) alkenes to their corresponding epoxides. One possible role of this small protein might be to facilitate electron transfer between the reductase and ferredoxin components. The chain is Alkene monooxygenase system, effector subunit from Xanthobacter autotrophicus (strain ATCC BAA-1158 / Py2).